A 106-amino-acid polypeptide reads, in one-letter code: UPF0145 protein Athe_0545 (106 aa).

Belongs to the UPF0145 family.

This is UPF0145 protein Athe_0545 from Caldicellulosiruptor bescii (strain ATCC BAA-1888 / DSM 6725 / KCTC 15123 / Z-1320) (Anaerocellum thermophilum).